Consider the following 282-residue polypeptide: Acyl-CoA-binding domain-containing protein 6 (282 aa).

A compositionally biased stretch (polar residues) spans 1-12; sequence MASSFLPSGATT. Positions 1–34 are disordered; the sequence is MASSFLPSGATTGDSGGELSSGDDSGDVESLQSP. Residues 17–31 are compositionally biased toward low complexity; it reads GELSSGDDSGDVESL. Position 41 is a phosphoserine (S41). An ACB domain is found at 42–127; sequence LPELFEKAAE…VKKLDPSWNP (86 aa). Residues 69–73 and K95 contribute to the an acyl-CoA site; that span reads YARYK. Residue S106 is modified to Phosphoserine. Y114 contributes to the an acyl-CoA binding site. ANK repeat units lie at residues 191 to 220 and 224 to 253; these read EGRTLLHWACDRGHKELVTVLLQYRADINC and EGQTALHYAAACEFLDIVELLLQSGADPTL.

As to quaternary structure, monomer.

It is found in the cytoplasm. In terms of biological role, binds long-chain acyl-coenzyme A molecules with a strong preference for unsaturated C18:1-CoA, lower affinity for unsaturated C20:4-CoA, and very weak affinity for saturated C16:0-CoA. Does not bind fatty acids. This chain is Acyl-CoA-binding domain-containing protein 6 (ACBD6), found in Bos taurus (Bovine).